The following is a 450-amino-acid chain: UDP-N-acetylmuramoylalanine--D-glutamate ligase (450 aa).

119-125 (GSNGKTT) serves as a coordination point for ATP.

Belongs to the MurCDEF family.

The protein localises to the cytoplasm. The catalysed reaction is UDP-N-acetyl-alpha-D-muramoyl-L-alanine + D-glutamate + ATP = UDP-N-acetyl-alpha-D-muramoyl-L-alanyl-D-glutamate + ADP + phosphate + H(+). Its pathway is cell wall biogenesis; peptidoglycan biosynthesis. Cell wall formation. Catalyzes the addition of glutamate to the nucleotide precursor UDP-N-acetylmuramoyl-L-alanine (UMA). The polypeptide is UDP-N-acetylmuramoylalanine--D-glutamate ligase (Streptococcus pneumoniae (strain JJA)).